The chain runs to 253 residues: MQQNTSATAQPGSTVDAAEIAKFSKLSAEWWDPKGKMAPLHRINPLRLGYIRDAACRKFERNVRSLNCLGGLRVLDIGCGAGLLCEPLSRLGAQVIGVDPSQSNIAAAKLHADKSHLAIDYRCTTVEEIDPRERFDIVLAMEVVEHVVDVGVFLKRCAAMLKPNGLMVVSTLNRNWKSFALAIVGAEYVLRWLPRGTHEWNKFVTPDELTKYLLDNRLVITEQTGVVYSPFADKWTLSSDMDVNYMVVAEGMV.

Arg-47, Gly-78, Asp-99, and Met-141 together coordinate S-adenosyl-L-methionine.

This sequence belongs to the methyltransferase superfamily. UbiG/COQ3 family.

It catalyses the reaction a 3-demethylubiquinol + S-adenosyl-L-methionine = a ubiquinol + S-adenosyl-L-homocysteine + H(+). It carries out the reaction a 3-(all-trans-polyprenyl)benzene-1,2-diol + S-adenosyl-L-methionine = a 2-methoxy-6-(all-trans-polyprenyl)phenol + S-adenosyl-L-homocysteine + H(+). Its pathway is cofactor biosynthesis; ubiquinone biosynthesis. O-methyltransferase that catalyzes the 2 O-methylation steps in the ubiquinone biosynthetic pathway. The chain is Ubiquinone biosynthesis O-methyltransferase from Bradyrhizobium diazoefficiens (strain JCM 10833 / BCRC 13528 / IAM 13628 / NBRC 14792 / USDA 110).